The chain runs to 124 residues: Small ribosomal subunit protein uS12 (124 aa).

Aspartate 89 bears the 3-methylthioaspartic acid mark.

This sequence belongs to the universal ribosomal protein uS12 family. As to quaternary structure, part of the 30S ribosomal subunit. Contacts proteins S8 and S17. May interact with IF1 in the 30S initiation complex.

Its function is as follows. With S4 and S5 plays an important role in translational accuracy. Functionally, interacts with and stabilizes bases of the 16S rRNA that are involved in tRNA selection in the A site and with the mRNA backbone. Located at the interface of the 30S and 50S subunits, it traverses the body of the 30S subunit contacting proteins on the other side and probably holding the rRNA structure together. The combined cluster of proteins S8, S12 and S17 appears to hold together the shoulder and platform of the 30S subunit. This Blochmanniella pennsylvanica (strain BPEN) protein is Small ribosomal subunit protein uS12.